The chain runs to 1194 residues: F-box only protein 38 (1194 aa).

The region spanning 30-75 is the F-box domain; the sequence is MNQLSHEVLCHIFRYLPLQDIMCMECLSRKLKEAVTLYLRVVRVVD. An interaction with KLF7 region spans residues 59 to 119; the sequence is KLKEAVTLYL…LHPRYLERRR (61 aa). Short sequence motifs (nuclear export signal) lie at residues 194-201, 307-316, and 451-460; these read LHLVGVNV, LEVDLGYLII, and LLPSLEFISL. Disordered stretches follow at residues 487–529, 577–776, 793–879, and 896–915; these read ALVS…FRPD, EEQA…DAES, RTGR…RARS, and KPCH…STSD. Residues 493–510 are compositionally biased toward low complexity; sequence NSNNDNDNNAPNNNANLH. The residue at position 592 (threonine 592) is a Phosphothreonine. 3 positions are modified to phosphoserine: serine 599, serine 601, and serine 607. Acidic residues predominate over residues 599–609; that stretch reads SESDDEEDSLE. Composition is skewed to basic and acidic residues over residues 622 to 631 and 683 to 701; these read RYSEREEKTG and IKAD…KSKD. Low complexity predominate over residues 705 to 728; it reads SCSSSSSSTAASTAGNASSPSTAS. Residues serine 742 and serine 746 each carry the phosphoserine modification. Over residues 764-774 the composition is skewed to acidic residues; that stretch reads EDSEAMEEGDA. A compositionally biased stretch (basic and acidic residues) spans 793 to 804; it reads RTGRCSDEERPS. Over residues 855-867 the composition is skewed to polar residues; it reads SSQPESCDVQSNE. Residues 896–906 are compositionally biased toward basic residues; sequence KPCHAMKRKRT. A Nuclear localization signal motif is present at residues 902–905; that stretch reads KRKR.

In terms of assembly, part of the SCF (SKP1-CUL1-F-box) E3 ubiquitin-protein ligase complex SCF(FBXO38) composed of CUL1, SKP1, RBX1 and FBXO38. Interacts with KLF7. Interacts with PDCD1/PD-1. Expressed at high levels in embryo (developing brain, spinal cord, branchial arms and limbs). Widely expressed at low levels in adult tissues, with highest expression in testis. Expressed in postmeiotic spermatids.

The protein localises to the cytoplasm. Its subcellular location is the cytosol. The protein resides in the nucleus. It functions in the pathway protein modification; protein ubiquitination. Functionally, substrate recognition component of a SCF (SKP1-CUL1-F-box protein) E3 ubiquitin-protein ligase complex which mediates the ubiquitination and subsequent proteasomal degradation of PDCD1/PD-1, thereby regulating T-cells-mediated immunity. Required for anti-tumor activity of T-cells by promoting the degradation of PDCD1/PD-1; the PDCD1-mediated inhibitory pathway being exploited by tumors to attenuate anti-tumor immunity and facilitate tumor survival. May indirectly stimulate the activity of transcription factor KLF7, a regulator of neuronal differentiation, without promoting KLF7 ubiquitination. The protein is F-box only protein 38 of Mus musculus (Mouse).